Here is a 320-residue protein sequence, read N- to C-terminus: Lipoyl synthase (320 aa).

Residues Cys67, Cys72, Cys78, Cys93, Cys97, Cys100, and Ser307 each contribute to the [4Fe-4S] cluster site. The region spanning 79–296 (FNHGTATFMI…RDKAEKMGFE (218 aa)) is the Radical SAM core domain.

It belongs to the radical SAM superfamily. Lipoyl synthase family. The cofactor is [4Fe-4S] cluster.

The protein localises to the cytoplasm. It carries out the reaction [[Fe-S] cluster scaffold protein carrying a second [4Fe-4S](2+) cluster] + N(6)-octanoyl-L-lysyl-[protein] + 2 oxidized [2Fe-2S]-[ferredoxin] + 2 S-adenosyl-L-methionine + 4 H(+) = [[Fe-S] cluster scaffold protein] + N(6)-[(R)-dihydrolipoyl]-L-lysyl-[protein] + 4 Fe(3+) + 2 hydrogen sulfide + 2 5'-deoxyadenosine + 2 L-methionine + 2 reduced [2Fe-2S]-[ferredoxin]. Its pathway is protein modification; protein lipoylation via endogenous pathway; protein N(6)-(lipoyl)lysine from octanoyl-[acyl-carrier-protein]: step 2/2. Catalyzes the radical-mediated insertion of two sulfur atoms into the C-6 and C-8 positions of the octanoyl moiety bound to the lipoyl domains of lipoate-dependent enzymes, thereby converting the octanoylated domains into lipoylated derivatives. The polypeptide is Lipoyl synthase (Histophilus somni (strain 129Pt) (Haemophilus somnus)).